The following is a 279-amino-acid chain: Ribosomal RNA small subunit methyltransferase J (279 aa).

S-adenosyl-L-methionine-binding positions include 138 to 139 and Asp-194; that span reads ER.

Belongs to the methyltransferase superfamily. RsmJ family.

It is found in the cytoplasm. The catalysed reaction is guanosine(1516) in 16S rRNA + S-adenosyl-L-methionine = N(2)-methylguanosine(1516) in 16S rRNA + S-adenosyl-L-homocysteine + H(+). In terms of biological role, specifically methylates the guanosine in position 1516 of 16S rRNA. The protein is Ribosomal RNA small subunit methyltransferase J of Acinetobacter baumannii (strain AYE).